An 836-amino-acid chain; its full sequence is MDEADFSEHTTYKQEDLPYDGDLSQIKIGNDYSFTSKKDGLEVLNQIIFIADDPQEKAMHSETCGNTAVTIPLGKITENAANKKDEKEKQCTAALHIPANEGDASKSSISDILLHHLSKEPFLRGQGIDCETLPEISNADSFEEEAIIKSIISCYNKNSWPKEQTPELTDQLNPKRDGENSNKPGSATTTEENTSDLEGPVAAGDSSHQENVNVLTKTKGPGDKQKSYQGQSPQKQQTEKANSGNTFKYGQGQVHYQLPDFSKIAPKVKIPKNKIINKPLAIAKQASFSSKSRDKPTLVQDSLETTPESNCVEKQHQEQKGKITEPSQQIQMEPIVHIHQELLTGIESEASLSKLSPTSQKGTSSSSSYIFQKISQGKQMCQKLKEQTDQLKTKVQEFSKRIKQDSPYHLQDKKLVLEKLQGHLELLEQNFLATKDKHLTLQQQVHKHESTIVGDFDPERKVEGEIFKLEMLLEDVKEKMDESKYTSAPSLPVSSPVTLDDLASTFSSLSNEIPKEHPGHPSGPRGSGGSEVTGTPQGGPQEAPNEELCELAPQTYLNGHYGDAAAQNKPDQVAMRLSSNSGEDPNGTPRRQDCAEMTAPSPSCAFCRRLLEWKQNVEKKGHGRINCGRFSIVLHEKAPHSDSTPNSDTGHSFCSDSGTEMQSNKCQDCGTKIPTSRRACRKEPTKEFHYRYNTPGQNYSNHSKRGAFVQPHSLDESKNSSPSFLKPKRICSQRVNSKSFKGEHEPTPGKKKLQAFMTYSSDPATPSPHFYSCRISGSKSLCDFDSTEEIKSEILNSALDHALRTATILKETTDQMIKTIAEDLAKAQRWRNRLKY.

3 stretches are compositionally biased toward polar residues: residues 159–172 (SWPK…TDQL), 181–192 (SNKPGSATTTEE), and 227–248 (SYQG…NTFK). 2 disordered regions span residues 159-248 (SWPK…NTFK) and 303-325 (LETT…KITE). The span at 311–323 (CVEKQHQEQKGKI) shows a compositional bias: basic and acidic residues. A coiled-coil region spans residues 372–484 (QKISQGKQMC…DVKEKMDESK (113 aa)). 2 disordered regions span residues 510-545 (SNEI…EAPN) and 575-596 (MRLS…DCAE).

Belongs to the AKNA family.

The chain is Protein AKNAD1 (AKNAD1) from Homo sapiens (Human).